The sequence spans 290 residues: Sodium/potassium-transporting ATPase subunit beta-2 (290 aa).

The Cytoplasmic segment spans residues 1–39; sequence MVIQKEKKSCGQVVEEWKEFVWNPRTHQFMGRTGTSWAF. Residues 40–67 traverse the membrane as a helical; Signal-anchor for type II membrane protein segment; the sequence is ILLFYLVFYGFLTAMFTLTMWVMLQTVS. Residues 68–290 are Extracellular-facing; sequence EHTPKYQDRL…VAFKLRINKT (223 aa). N-linked (GlcNAc...) asparagine glycans are attached at residues Asn-96 and Asn-118. A disulfide bond links Cys-129 and Cys-150. 2 N-linked (GlcNAc...) asparagine glycosylation sites follow: Asn-153 and Asn-159. Cysteines 160 and 177 form a disulfide. Asn-193, Asn-197, and Asn-238 each carry an N-linked (GlcNAc...) asparagine glycan. The immunoglobulin-like stretch occupies residues 193–290; sequence NQSMNVTCAG…VAFKLRINKT (98 aa). Residues Cys-200 and Cys-261 are joined by a disulfide bond.

The protein belongs to the X(+)/potassium ATPases subunit beta family. As to quaternary structure, the sodium/potassium-transporting ATPase is composed of a catalytic alpha subunit, an auxiliary non-catalytic beta subunit and an additional regulatory subunit. Interacts with BSG.

It localises to the cell membrane. Its function is as follows. This is the non-catalytic component of the active enzyme, which catalyzes the hydrolysis of ATP coupled with the exchange of Na(+) and K(+) ions across the plasma membrane. The exact function of the beta-2 subunit is not known. In terms of biological role, mediates cell adhesion of neurons and astrocytes, and promotes neurite outgrowth. The polypeptide is Sodium/potassium-transporting ATPase subunit beta-2 (ATP1B2) (Oryctolagus cuniculus (Rabbit)).